The chain runs to 672 residues: Ubiquitin carboxyl-terminal hydrolase 19 (672 aa).

The chain crosses the membrane as a helical span at residues 11–31 (NSFTQLILTLFFVSIGLLYFV). The Zn(2+) site is built by Cys64, Cys67, Cys75, Cys78, Cys84, Cys88, His97, and Cys101. The MYND-type zinc-finger motif lies at 64 to 101 (CSVCGKATTKKCSRCKSVRYCSAACQTSDWKSGHKLKC). In terms of domain architecture, USP spans 174-480 (CGLTNCGNSC…RAYMLLYSRV (307 aa)). Catalysis depends on Cys183, which acts as the Nucleophile. His439 serves as the catalytic Proton acceptor. The segment at 484–672 (PSNLRSEESQ…HSDTEMIDAQ (189 aa)) is disordered. Residues 488-499 (RSEESQDEKKTD) show a composition bias toward basic and acidic residues. Polar residues predominate over residues 500–527 (TLNTESNQDGSVESSGVGTNDTSVSSLC). Basic and acidic residues-rich tracts occupy residues 533 to 543 (HSEDPEYEKES) and 553 to 594 (EEGK…KEDP). A compositionally biased stretch (polar residues) spans 606 to 615 (LDITTPSPSA). Positions 623–666 (ENERSDTESKPLEKEHSDTESNKPLEKEHLDSESKPLEKEHSDT) are enriched in basic and acidic residues.

It belongs to the peptidase C19 family.

It is found in the membrane. It catalyses the reaction Thiol-dependent hydrolysis of ester, thioester, amide, peptide and isopeptide bonds formed by the C-terminal Gly of ubiquitin (a 76-residue protein attached to proteins as an intracellular targeting signal).. In terms of biological role, recognizes and hydrolyzes the peptide bond at the C-terminal Gly of ubiquitin. Involved in the processing of poly-ubiquitin precursors as well as that of ubiquitinated proteins. In Arabidopsis thaliana (Mouse-ear cress), this protein is Ubiquitin carboxyl-terminal hydrolase 19 (UBP19).